We begin with the raw amino-acid sequence, 100 residues long: Integration host factor subunit alpha (100 aa).

It belongs to the bacterial histone-like protein family. As to quaternary structure, heterodimer of an alpha and a beta chain.

This protein is one of the two subunits of integration host factor, a specific DNA-binding protein that functions in genetic recombination as well as in transcriptional and translational control. The chain is Integration host factor subunit alpha from Cereibacter sphaeroides (strain ATCC 17023 / DSM 158 / JCM 6121 / CCUG 31486 / LMG 2827 / NBRC 12203 / NCIMB 8253 / ATH 2.4.1.) (Rhodobacter sphaeroides).